Here is a 428-residue protein sequence, read N- to C-terminus: Glucose-1-phosphate adenylyltransferase (428 aa).

Residues Tyr-114, Gly-179, 194–195 (EK), and Ser-212 contribute to the alpha-D-glucose 1-phosphate site.

The protein belongs to the bacterial/plant glucose-1-phosphate adenylyltransferase family. In terms of assembly, homotetramer.

It carries out the reaction alpha-D-glucose 1-phosphate + ATP + H(+) = ADP-alpha-D-glucose + diphosphate. The protein operates within glycan biosynthesis; glycogen biosynthesis. Its function is as follows. Involved in the biosynthesis of ADP-glucose, a building block required for the elongation reactions to produce glycogen. Catalyzes the reaction between ATP and alpha-D-glucose 1-phosphate (G1P) to produce pyrophosphate and ADP-Glc. In Yersinia pseudotuberculosis serotype O:1b (strain IP 31758), this protein is Glucose-1-phosphate adenylyltransferase.